Reading from the N-terminus, the 244-residue chain is Vesicle-associated membrane protein-associated protein SCS2 (244 aa).

Ser-2 carries the post-translational modification N-acetylserine. Residues 2-222 lie on the Cytoplasmic side of the membrane; sequence SAVEISPDVL…EAATVPAENE (221 aa). In terms of domain architecture, MSP spans 3 to 126; it reads AVEISPDVLV…ISKKIKVKYL (124 aa). Ser-106 carries the phosphoserine modification. The interval 135–219 is disordered; sequence QNQNIQENKE…QIKEAATVPA (85 aa). Positions 153–168 are enriched in basic and acidic residues; that stretch reads SEPKEVPAVVNEKEVP. Polar residues predominate over residues 199–211; sequence QTSNSTPAPQNQI. Residues 223 to 243 form a helical; Anchor for type IV membrane protein membrane-spanning segment; sequence SSSMGIFILVALLILVLGWFY. Position 244 (Arg-244) is a topological domain, lumenal.

It belongs to the VAMP-associated protein (VAP) (TC 9.B.17) family. Interacts with OPI1. Also interacts with PBI1. Interacts with EPO1.

It is found in the endoplasmic reticulum membrane. Its subcellular location is the nucleus membrane. Functionally, acts as an endoplasmic reticulum (ER) membrane anchor for cytoplasmic proteins via binding to the FFAT motif of targeted proteins. Regulates phospholipid biosynthesis by modulating the subcellular localization of the transcriptional repressor OPI1. Also contributes to the tethering of the ER to the plasma membrane. Allows interorganelle phosphatidylserine (PtdSer) transport via a process that involves the acceptor membrane complex PDR17-PDS2 that binds to PBI1 which in turn ligates to SCS2 and phosphatidic acid present in the donor membrane, forming a zone of apposition that facilitates PtdSer transfer. The polypeptide is Vesicle-associated membrane protein-associated protein SCS2 (Saccharomyces cerevisiae (strain ATCC 204508 / S288c) (Baker's yeast)).